A 440-amino-acid chain; its full sequence is UPF0761 membrane protein Rru_A2625 (440 aa).

The next 7 membrane-spanning stretches (helical) occupy residues 29-49 (ILAT…THDI), 61-81 (LLAL…FPGF), 117-137 (GLTA…LLTI), 157-177 (LLVY…SFSL), 201-221 (PTLG…MLVP), 224-244 (PVPL…SALL), and 264-284 (ALAA…VVLM).

This sequence belongs to the UPF0761 family.

The protein resides in the cell inner membrane. In Rhodospirillum rubrum (strain ATCC 11170 / ATH 1.1.1 / DSM 467 / LMG 4362 / NCIMB 8255 / S1), this protein is UPF0761 membrane protein Rru_A2625.